The chain runs to 201 residues: Lipopolysaccharide core heptose(II)-phosphate phosphatase (201 aa).

The first 33 residues, 1-33 (MLAFTLRFIKNKRYFAILAGALVIIAGLASQHA), serve as a signal peptide directing secretion.

The protein belongs to the phosphoglycerate mutase family. Ais subfamily.

The protein localises to the periplasm. The protein operates within bacterial outer membrane biogenesis; lipopolysaccharide metabolism. Catalyzes the dephosphorylation of heptose(II) of the outer membrane lipopolysaccharide core. This is Lipopolysaccharide core heptose(II)-phosphate phosphatase from Salmonella typhi.